We begin with the raw amino-acid sequence, 216 residues long: Ribosomal RNA small subunit methyltransferase G (216 aa).

S-adenosyl-L-methionine-binding positions include glycine 81, leucine 86, valine 132 to glutamate 133, and arginine 147.

It belongs to the methyltransferase superfamily. RNA methyltransferase RsmG family.

Its subcellular location is the cytoplasm. The catalysed reaction is guanosine(527) in 16S rRNA + S-adenosyl-L-methionine = N(7)-methylguanosine(527) in 16S rRNA + S-adenosyl-L-homocysteine. Functionally, specifically methylates the N7 position of guanine in position 527 of 16S rRNA. The chain is Ribosomal RNA small subunit methyltransferase G from Hydrogenovibrio crunogenus (strain DSM 25203 / XCL-2) (Thiomicrospira crunogena).